Consider the following 493-residue polypeptide: Alpha-amylase-related protein (493 aa).

The N-terminal stretch at 1–19 (MFKLALTLTLCLAGSLSLA) is a signal peptide. Glutamine 20 carries the post-translational modification Pyrrolidone carboxylic acid. Cysteine 47 and cysteine 103 are oxidised to a cystine. Residues asparagine 117, glutamine 168, and aspartate 177 each coordinate Ca(2+). Cysteine 156 and cysteine 170 form a disulfide bridge. Position 205 (arginine 205) interacts with chloride. Aspartate 207 acts as the Nucleophile in catalysis. Histidine 211 is a Ca(2+) binding site. Glutamate 244 functions as the Proton donor in the catalytic mechanism. Residues asparagine 307 and arginine 342 each contribute to the chloride site. 3 cysteine pairs are disulfide-bonded: cysteine 375–cysteine 381, cysteine 417–cysteine 440, and cysteine 447–cysteine 459.

It belongs to the glycosyl hydrolase 13 family. As to quaternary structure, monomer. Ca(2+) serves as cofactor. The cofactor is chloride.

The protein localises to the secreted. The catalysed reaction is Endohydrolysis of (1-&gt;4)-alpha-D-glucosidic linkages in polysaccharides containing three or more (1-&gt;4)-alpha-linked D-glucose units.. The sequence is that of Alpha-amylase-related protein (Amyrel) from Drosophila teissieri (Fruit fly).